The chain runs to 321 residues: Ribose-phosphate pyrophosphokinase (321 aa).

Residues 44 to 46 (DGE) and 103 to 104 (RQ) each bind ATP. Positions 137 and 179 each coordinate Mg(2+). Residue Lys202 is part of the active site. D-ribose 5-phosphate-binding positions include Arg204, Asp228, and 232 to 236 (DTAGT).

It belongs to the ribose-phosphate pyrophosphokinase family. Class I subfamily. As to quaternary structure, homohexamer. It depends on Mg(2+) as a cofactor.

The protein localises to the cytoplasm. It catalyses the reaction D-ribose 5-phosphate + ATP = 5-phospho-alpha-D-ribose 1-diphosphate + AMP + H(+). It participates in metabolic intermediate biosynthesis; 5-phospho-alpha-D-ribose 1-diphosphate biosynthesis; 5-phospho-alpha-D-ribose 1-diphosphate from D-ribose 5-phosphate (route I): step 1/1. Functionally, involved in the biosynthesis of the central metabolite phospho-alpha-D-ribosyl-1-pyrophosphate (PRPP) via the transfer of pyrophosphoryl group from ATP to 1-hydroxyl of ribose-5-phosphate (Rib-5-P). The sequence is that of Ribose-phosphate pyrophosphokinase from Staphylococcus saprophyticus subsp. saprophyticus (strain ATCC 15305 / DSM 20229 / NCIMB 8711 / NCTC 7292 / S-41).